The primary structure comprises 274 residues: Sulfur carrier protein FdhD (274 aa).

Cysteine 121 (cysteine persulfide intermediate) is an active-site residue. 258-263 serves as a coordination point for Mo-bis(molybdopterin guanine dinucleotide); the sequence is FSKPGR.

Belongs to the FdhD family.

It is found in the cytoplasm. Its function is as follows. Required for formate dehydrogenase (FDH) activity. Acts as a sulfur carrier protein that transfers sulfur from IscS to the molybdenum cofactor prior to its insertion into FDH. The polypeptide is Sulfur carrier protein FdhD (Yersinia pseudotuberculosis serotype O:1b (strain IP 31758)).